A 77-amino-acid polypeptide reads, in one-letter code: Defensin-like protein 159 (77 aa).

The signal sequence occupies residues 1-27; that stretch reads MAKLSCSYFLVLILVFSAFLMVERAEG. Cystine bridges form between Cys30–Cys77, Cys40–Cys59, Cys45–Cys71, and Cys49–Cys73.

Belongs to the DEFL family.

It is found in the secreted. This Arabidopsis thaliana (Mouse-ear cress) protein is Defensin-like protein 159 (LCR25).